The sequence spans 349 residues: Cytokine response-modifying protein B (349 aa).

Positions 1 to 22 (MKSVLYLYILFLSCIIINGRDA) are cleaved as a signal peptide. Residues 1-160 (MKSVLYLYIL…SPCGFGTYSH (160 aa)) form a TNF-binding region. 2 TNFR-Cys repeats span residues 31 to 66 (KCKD…TQCT) and 67 to 108 (PCGS…NRIC). Disulfide bonds link cysteine 32/cysteine 43, cysteine 44/cysteine 57, cysteine 47/cysteine 65, cysteine 68/cysteine 83, cysteine 86/cysteine 100, and cysteine 90/cysteine 108. 5 N-linked (GlcNAc...) asparagine; by host glycosylation sites follow: asparagine 101, asparagine 173, asparagine 189, asparagine 215, and asparagine 248. The chemokine-binding stretch occupies residues 161–349 (TVSSADKCEP…ITNSKPTRFL (189 aa)).

Belongs to the orthopoxvirus OPG002 family. Homodimer. Interacts with host TNF, LTA, CCL28, CCL25, CXCL12, CXCL13 and CXCl14.

The protein resides in the secreted. Functionally, inhibits host immune defense by binding to host TNF and various chemokines in the extracellular space. Binds host CC chemokines (beta chemokines) and CXC chemokines (alpha chemokines). The sequence is that of Cytokine response-modifying protein B (OPG002) from Variola virus (isolate Human/India/Ind3/1967) (VARV).